Consider the following 1353-residue polypeptide: Adenylate cyclase type 9 (1353 aa).

2 disordered regions span residues 1-27 and 49-71; these read MASPPHQQLLHHHSTEVSCDSSGDSNS and SISSSCSSSGDSGGVPRRVGGGG. Over 1–117 the chain is Cytoplasmic; that stretch reads MASPPHQQLL…CFPQTQRRFR (117 aa). The segment covering 16–27 has biased composition (polar residues); it reads EVSCDSSGDSNS. Residues 49 to 66 show a composition bias toward low complexity; it reads SISSSCSSSGDSGGVPRR. A helical transmembrane segment spans residues 118–138; that stretch reads YALFYIGFACLLWSIYFAVHM. The Extracellular portion of the chain corresponds to 139–141; sequence RSR. The helical transmembrane segment at 142–162 threads the bilayer; it reads LIVMVAPALCFLLVCVGFFLF. The Cytoplasmic segment spans residues 163–171; the sequence is TFTKLYARH. The chain crosses the membrane as a helical span at residues 172 to 192; that stretch reads YAWTSLALTLLVFALTLAAQF. Residues 193 to 215 lie on the Extracellular side of the membrane; it reads QVLTPVSGRGDSSNLTATARPTD. The N-linked (GlcNAc...) asparagine glycan is linked to N206. Residues 216-235 form a helical membrane-spanning segment; that stretch reads TCLSQVGSFSMCIEVLFLLY. Topologically, residues 236-241 are cytoplasmic; sequence TVMHLP. A helical membrane pass occupies residues 242 to 259; sequence LYLSLCLGVAYSVLFETF. At 260–280 the chain is on the extracellular side; it reads GYHFRDEACFPSPGAGALHWE. A helical membrane pass occupies residues 281 to 301; that stretch reads LLSRGLLHGCIHAIGVHLFVM. Topologically, residues 302-786 are cytoplasmic; sequence SQVRSRSTFL…VKTFASPTFS (485 aa). The tract at residues 349–375 is disordered; sequence QGDEESENSVKRHATSSPKNRKKKSSI. Residues 359–374 show a composition bias toward basic residues; the sequence is KRHATSSPKNRKKKSS. Residues 394–521 form the Guanylate cyclase 1 domain; sequence SILFADIVGF…NDVNLANLME (128 aa). D399, I400, and D443 together coordinate Mg(2+). Residues 399–404, 441–443, and R487 contribute to the ATP site; these read DIVGFT and LGD. A Phosphoserine modification is found at S610. Residues 642 to 684 are disordered; that stretch reads EAGAEGGAPQNGCQDEHKNSTKASGGPNPKTQNGLLSPPQEEK. Residues S688, S691, and S706 each carry the phosphoserine modification. The helical transmembrane segment at 787-807 threads the bilayer; that stretch reads SLLDVFLSTTVFLTLSTTCFL. Residues 808–818 lie on the Extracellular side of the membrane; sequence KYEAATVPPPP. A helical transmembrane segment spans residues 819–839; sequence AALAVFSAALLLEVLSLAVSI. The Cytoplasmic portion of the chain corresponds to 840-867; it reads RMVFFLEDVMACTKRLLEWIAGWLPRHC. A helical transmembrane segment spans residues 868-888; the sequence is IGAILVSLPALAVYSHVTSEY. Residues 889–891 are Extracellular-facing; the sequence is ETN. A helical membrane pass occupies residues 892–912; sequence IHFPVFTGSAALIAVVHYCNF. At 913–920 the chain is on the cytoplasmic side; that stretch reads CQLSSWMR. Residues 921 to 941 traverse the membrane as a helical segment; the sequence is SSLATVVGAGPLLLLYVSLCP. The Extracellular segment spans residues 942–975; the sequence is DSSVLTSPLDAVQNFSSERNPCNSSVPRDLRRPA. 2 N-linked (GlcNAc...) asparagine glycosylation sites follow: N955 and N964. The helical transmembrane segment at 976–996 threads the bilayer; the sequence is SLIGQEVVLVFFLLLLLVWFL. At 997–1353 the chain is on the cytoplasmic side; that stretch reads NREFEVSYRL…LTKLNVSKSV (357 aa). Positions 1058-1198 constitute a Guanylate cyclase 2 domain; it reads GVIFASIVNF…DTVNIASRMD (141 aa). ATP-binding positions include K1108, 1185–1187, 1192–1196, and K1232; these read DIW and NIASR. Residues S1257, S1259, S1295, and S1307 each carry the phosphoserine modification. A compositionally biased stretch (polar residues) spans 1292-1301; the sequence is SLGSDSSTQA. Positions 1292–1326 are disordered; sequence SLGSDSSTQAKDAHLSPKRPWKEPVKAEERGRFGK. The segment covering 1302-1326 has biased composition (basic and acidic residues); that stretch reads KDAHLSPKRPWKEPVKAEERGRFGK.

It belongs to the adenylyl cyclase class-4/guanylyl cyclase family. Requires Mg(2+) as cofactor. Mn(2+) is required as a cofactor. Detected in skeletal muscle, pancreas, lung, heart, kidney, liver, brain and placenta. Expressed in multiple cells of the lung, with expression highest in airway smooth muscle.

The protein localises to the cell membrane. The catalysed reaction is ATP = 3',5'-cyclic AMP + diphosphate. With respect to regulation, insensitive to calcium/calmodulin, forskolin and somatostatin. Stimulated by beta-adrenergic receptor activation. Activity is down-regulated by calcium/calcineurin. In terms of biological role, adenylyl cyclase that catalyzes the formation of the signaling molecule cAMP in response to activation of G protein-coupled receptors. Contributes to signaling cascades activated by CRH (corticotropin-releasing factor), corticosteroids and beta-adrenergic receptors. This is Adenylate cyclase type 9 (ADCY9) from Homo sapiens (Human).